Reading from the N-terminus, the 112-residue chain is Large ribosomal subunit protein uL22 (112 aa).

It belongs to the universal ribosomal protein uL22 family. Part of the 50S ribosomal subunit.

In terms of biological role, this protein binds specifically to 23S rRNA; its binding is stimulated by other ribosomal proteins, e.g. L4, L17, and L20. It is important during the early stages of 50S assembly. It makes multiple contacts with different domains of the 23S rRNA in the assembled 50S subunit and ribosome. The globular domain of the protein is located near the polypeptide exit tunnel on the outside of the subunit, while an extended beta-hairpin is found that lines the wall of the exit tunnel in the center of the 70S ribosome. This is Large ribosomal subunit protein uL22 from Finegoldia magna (strain ATCC 29328 / DSM 20472 / WAL 2508) (Peptostreptococcus magnus).